The chain runs to 136 residues: Acidic phospholipase A2 EC-I (136 aa).

Positions 1 to 16 (MKTLWIVAVWLIAVEG) are cleaved as a signal peptide. Disulfide bonds link cysteine 42/cysteine 129, cysteine 44/cysteine 60, cysteine 59/cysteine 111, cysteine 65/cysteine 136, cysteine 66/cysteine 104, cysteine 73/cysteine 97, and cysteine 91/cysteine 102. Positions 43, 45, and 47 each coordinate Ca(2+). Histidine 63 is an active-site residue. Aspartate 64 provides a ligand contact to Ca(2+). Aspartate 105 is an active-site residue. The segment at 112–133 (LGENVNTYDKKYKSYEDCTEEV) is may be responsible for inhibition of the platelet-aggregation activity.

It belongs to the phospholipase A2 family. Group II subfamily. D49 sub-subfamily. As to quaternary structure, monomer. The cofactor is Ca(2+). In terms of tissue distribution, expressed by the venom gland.

It localises to the secreted. It carries out the reaction a 1,2-diacyl-sn-glycero-3-phosphocholine + H2O = a 1-acyl-sn-glycero-3-phosphocholine + a fatty acid + H(+). Its function is as follows. Snake venom phospholipase A2 (PLA2) that inhibits human platelet aggregation induced by ADP, collagen and epinephrin (possibly by binding the platelet receptor alpha-IIb/beta-III) and induces mild edema in the foot pads of mice. PLA2 catalyzes the calcium-dependent hydrolysis of the 2-acyl groups in 3-sn-phosphoglycerides. This Echis carinatus (Saw-scaled viper) protein is Acidic phospholipase A2 EC-I.